An 89-amino-acid chain; its full sequence is Small ribosomal subunit protein uS15 (89 aa).

The protein belongs to the universal ribosomal protein uS15 family. As to quaternary structure, part of the 30S ribosomal subunit. Forms a bridge to the 50S subunit in the 70S ribosome, contacting the 23S rRNA.

One of the primary rRNA binding proteins, it binds directly to 16S rRNA where it helps nucleate assembly of the platform of the 30S subunit by binding and bridging several RNA helices of the 16S rRNA. Functionally, forms an intersubunit bridge (bridge B4) with the 23S rRNA of the 50S subunit in the ribosome. The polypeptide is Small ribosomal subunit protein uS15 (Mycobacterium avium (strain 104)).